A 415-amino-acid polypeptide reads, in one-letter code: Serine--tRNA ligase (415 aa).

L-serine is bound at residue 230–232; that stretch reads TAE. 261–263 lines the ATP pocket; the sequence is RKE. Position 284 (glutamate 284) interacts with L-serine. 348–351 provides a ligand contact to ATP; the sequence is EISS. An L-serine-binding site is contributed by serine 382.

It belongs to the class-II aminoacyl-tRNA synthetase family. Type-1 seryl-tRNA synthetase subfamily. As to quaternary structure, homodimer. The tRNA molecule binds across the dimer.

The protein localises to the cytoplasm. It carries out the reaction tRNA(Ser) + L-serine + ATP = L-seryl-tRNA(Ser) + AMP + diphosphate + H(+). The catalysed reaction is tRNA(Sec) + L-serine + ATP = L-seryl-tRNA(Sec) + AMP + diphosphate + H(+). The protein operates within aminoacyl-tRNA biosynthesis; selenocysteinyl-tRNA(Sec) biosynthesis; L-seryl-tRNA(Sec) from L-serine and tRNA(Sec): step 1/1. Its function is as follows. Catalyzes the attachment of serine to tRNA(Ser). Is also able to aminoacylate tRNA(Sec) with serine, to form the misacylated tRNA L-seryl-tRNA(Sec), which will be further converted into selenocysteinyl-tRNA(Sec). This chain is Serine--tRNA ligase, found in Sulfurimonas denitrificans (strain ATCC 33889 / DSM 1251) (Thiomicrospira denitrificans (strain ATCC 33889 / DSM 1251)).